The chain runs to 556 residues: Arginine--tRNA ligase (556 aa).

A 'HIGH' region motif is present at residues 132 to 142 (VNPTGDLHLGH).

It belongs to the class-I aminoacyl-tRNA synthetase family. Monomer.

The protein localises to the cytoplasm. The enzyme catalyses tRNA(Arg) + L-arginine + ATP = L-arginyl-tRNA(Arg) + AMP + diphosphate. The protein is Arginine--tRNA ligase of Oceanobacillus iheyensis (strain DSM 14371 / CIP 107618 / JCM 11309 / KCTC 3954 / HTE831).